A 491-amino-acid polypeptide reads, in one-letter code: Stage IV sporulation protein A (491 aa).

Residues 23–30 carry the Walker A motif; involved in ATP-binding motif; it reads GPVRTGKS. Residue 23-30 participates in ATP binding; the sequence is GPVRTGKS. The stretch at 334–362 forms a coiled coil; that stretch reads QLLSLITRLSKVKNEYDKIESALIDAKIK.

Interacts (via Walker A motif) with SipL (via C-terminus LysM domain).

The protein resides in the cytoplasm. The enzyme catalyses ATP + H2O = ADP + phosphate + H(+). Its function is as follows. ATPase. Has a role at an early stage in the morphogenesis of the spore coat and is required for proper coat localization to the forespore. The polypeptide is Stage IV sporulation protein A (Clostridioides difficile (strain 630) (Peptoclostridium difficile)).